A 300-amino-acid polypeptide reads, in one-letter code: Ribosomal protein L11 methyltransferase (300 aa).

Thr141, Gly164, Asp186, and Asn233 together coordinate S-adenosyl-L-methionine.

Belongs to the methyltransferase superfamily. PrmA family.

The protein localises to the cytoplasm. It carries out the reaction L-lysyl-[protein] + 3 S-adenosyl-L-methionine = N(6),N(6),N(6)-trimethyl-L-lysyl-[protein] + 3 S-adenosyl-L-homocysteine + 3 H(+). In terms of biological role, methylates ribosomal protein L11. This chain is Ribosomal protein L11 methyltransferase, found in Synechocystis sp. (strain ATCC 27184 / PCC 6803 / Kazusa).